Consider the following 330-residue polypeptide: Ketol-acid reductoisomerase (NADP(+)) (330 aa).

The 182-residue stretch at 3-184 (LSVYYDKDID…GGGRMGVLET (182 aa)) folds into the KARI N-terminal Rossmann domain. NADP(+) contacts are provided by residues 26–29 (YGTQ), S52, and S54. H109 is an active-site residue. An NADP(+)-binding site is contributed by G135. The region spanning 185 to 329 (SFKEECESDL…EILRTPFNHE (145 aa)) is the KARI C-terminal knotted domain. Mg(2+)-binding residues include D193, E197, E229, and E233. S254 contacts substrate.

Belongs to the ketol-acid reductoisomerase family. Requires Mg(2+) as cofactor.

It carries out the reaction (2R)-2,3-dihydroxy-3-methylbutanoate + NADP(+) = (2S)-2-acetolactate + NADPH + H(+). The enzyme catalyses (2R,3R)-2,3-dihydroxy-3-methylpentanoate + NADP(+) = (S)-2-ethyl-2-hydroxy-3-oxobutanoate + NADPH + H(+). The protein operates within amino-acid biosynthesis; L-isoleucine biosynthesis; L-isoleucine from 2-oxobutanoate: step 2/4. It participates in amino-acid biosynthesis; L-valine biosynthesis; L-valine from pyruvate: step 2/4. Involved in the biosynthesis of branched-chain amino acids (BCAA). Catalyzes an alkyl-migration followed by a ketol-acid reduction of (S)-2-acetolactate (S2AL) to yield (R)-2,3-dihydroxy-isovalerate. In the isomerase reaction, S2AL is rearranged via a Mg-dependent methyl migration to produce 3-hydroxy-3-methyl-2-ketobutyrate (HMKB). In the reductase reaction, this 2-ketoacid undergoes a metal-dependent reduction by NADPH to yield (R)-2,3-dihydroxy-isovalerate. The sequence is that of Ketol-acid reductoisomerase (NADP(+)) from Helicobacter acinonychis (strain Sheeba).